The sequence spans 824 residues: Molybdenum cofactor sulfurase (824 aa).

Lys-274 is subject to N6-(pyridoxal phosphate)lysine. Cys-433 is a catalytic residue. The region spanning Cys-655–Ser-822 is the MOSC domain.

Belongs to the class-V pyridoxal-phosphate-dependent aminotransferase family. MOCOS subfamily. Pyridoxal 5'-phosphate is required as a cofactor.

The enzyme catalyses Mo-molybdopterin + L-cysteine + AH2 = thio-Mo-molybdopterin + L-alanine + A + H2O. It participates in cofactor biosynthesis; molybdopterin biosynthesis. In terms of biological role, sulfurates the molybdenum cofactor. Sulfation of molybdenum is essential for xanthine dehydrogenase (XDH) and aldehyde oxidase (ADO) enzymes in which molybdenum cofactor is liganded by 1 oxygen and 1 sulfur atom in active form. The chain is Molybdenum cofactor sulfurase (MCSU3) from Oryza sativa subsp. japonica (Rice).